The following is a 311-amino-acid chain: Glycine--tRNA ligase alpha subunit (311 aa).

The protein belongs to the class-II aminoacyl-tRNA synthetase family. As to quaternary structure, tetramer of two alpha and two beta subunits.

It localises to the cytoplasm. It catalyses the reaction tRNA(Gly) + glycine + ATP = glycyl-tRNA(Gly) + AMP + diphosphate. In Rhizobium meliloti (strain 1021) (Ensifer meliloti), this protein is Glycine--tRNA ligase alpha subunit.